Reading from the N-terminus, the 219-residue chain is Elongation factor Ts (219 aa).

The segment at T82–V85 is involved in Mg(2+) ion dislocation from EF-Tu.

The protein belongs to the EF-Ts family.

The protein localises to the cytoplasm. In terms of biological role, associates with the EF-Tu.GDP complex and induces the exchange of GDP to GTP. It remains bound to the aminoacyl-tRNA.EF-Tu.GTP complex up to the GTP hydrolysis stage on the ribosome. This Gloeobacter violaceus (strain ATCC 29082 / PCC 7421) protein is Elongation factor Ts.